Consider the following 87-residue polypeptide: Putative regulatory protein CHY_1489 (87 aa).

The protein belongs to the RemA family.

This chain is Putative regulatory protein CHY_1489, found in Carboxydothermus hydrogenoformans (strain ATCC BAA-161 / DSM 6008 / Z-2901).